Consider the following 481-residue polypeptide: Dual specificity protein kinase CLK4 (481 aa).

Disordered stretches follow at residues 1–47 (MRHS…KPHH) and 102–143 (SKSS…EDDE). Residues 8-19 (HCPDWDSRESWG) show a composition bias toward basic and acidic residues. 2 stretches are compositionally biased toward basic residues: residues 106-119 (VRSR…KRNR) and 126-136 (SHSKSHRRKRS). Residues serine 136 and serine 138 each carry the phosphoserine modification. The region spanning 159-475 (YEIVDTLGEG…LDEALQHPFF (317 aa)) is the Protein kinase domain. ATP contacts are provided by residues 165-173 (LGEGAFGKV) and lysine 189. Aspartate 286 acts as the Proton acceptor in catalysis.

It belongs to the protein kinase superfamily. CMGC Ser/Thr protein kinase family. Lammer subfamily. Interacts with UBL5. Post-translationally, autophosphorylates on all three types of residues. Expressed in the hippocampus, the cerebellum and the olfactory bulb.

The protein resides in the nucleus. It carries out the reaction L-seryl-[protein] + ATP = O-phospho-L-seryl-[protein] + ADP + H(+). The enzyme catalyses L-threonyl-[protein] + ATP = O-phospho-L-threonyl-[protein] + ADP + H(+). It catalyses the reaction L-tyrosyl-[protein] + ATP = O-phospho-L-tyrosyl-[protein] + ADP + H(+). With respect to regulation, TG003 inhibits its kinase activity and affects the regulation of alternative splicing mediated by phosphorylation of SR proteins. Its function is as follows. Dual specificity kinase acting on both serine/threonine and tyrosine-containing substrates. Phosphorylates serine- and arginine-rich (SR) proteins of the spliceosomal complex and may be a constituent of a network of regulatory mechanisms that enable SR proteins to control RNA splicing. Phosphorylates SRSF1 and SRSF3. Required for the regulation of alternative splicing of MAPT/TAU. Regulates the alternative splicing of tissue factor (F3) pre-mRNA in endothelial cells. This chain is Dual specificity protein kinase CLK4 (Clk4), found in Mus musculus (Mouse).